We begin with the raw amino-acid sequence, 875 residues long: Outer membrane usher protein FocD (875 aa).

A signal peptide spans 1 to 38 (MFFGDGGQLLSDKSLTGSAGGGNNRMKFNILPLAFFIG). Cysteines 852 and 874 form a disulfide.

This sequence belongs to the fimbrial export usher family.

The protein resides in the cell outer membrane. Involved in the export and assembly of the F1C fimbriae subunits across the outer membrane. This Escherichia coli protein is Outer membrane usher protein FocD (focD).